We begin with the raw amino-acid sequence, 754 residues long: Phosphatase and actin regulator 4B (754 aa).

Residues 1-12 (MENRDDEVEHQH) are compositionally biased toward basic and acidic residues. Disordered regions lie at residues 1–38 (MENR…FSTL), 83–105 (KELP…KNGH), 120–625 (VHSP…SKEQ), and 637–666 (LTRR…DRQA). An RPEL 1 repeat occupies 61–86 (EVLERKMSMRRPRQELIEQGVLKELP). Composition is skewed to basic and acidic residues over residues 138–153 (PEDR…DHRG), 184–221 (HGED…EPDW), and 229–241 (SSVE…RESD). Composition is skewed to low complexity over residues 296 to 307 (SFCSSNSSSSSS) and 316 to 333 (SSAG…LTTS). Composition is skewed to pro residues over residues 348-357 (KQPPMPPPKP), 381-390 (KPSPPMPPKR), 427-445 (LPPP…PSPP), and 460-478 (YPLP…PPED). Composition is skewed to acidic residues over residues 483–503 (DEDD…DEEP), 541–557 (SEEE…ESDS), and 566–576 (DESDEDEEDDS). Residues 605-615 (QAPERQAKSEH) show a composition bias toward basic and acidic residues. RPEL repeat units follow at residues 635-660 (TALT…QPKN) and 673-698 (RRLT…RFHE). S642 is subject to Phosphoserine.

The protein belongs to the phosphatase and actin regulator family. Binds ppp1ca and actin.

It is found in the cytoplasm. Its subcellular location is the cell projection. The protein localises to the lamellipodium. Its function is as follows. Regulator of protein phosphatase 1 (PP1) required for neural tube and optic fissure closure, and enteric neural crest cell (ENCCs) migration during development. Acts as an activator of PP1. During neural tube closure, localizes to the ventral neural tube and activates PP1, leading to down-regulate cell proliferation within cranial neural tissue and the neural retina. Also acts as a regulator of migration of enteric neural crest cells (ENCCs) by activating PP1, leading to repression of the integrin signaling through the rho/rock pathway. In Danio rerio (Zebrafish), this protein is Phosphatase and actin regulator 4B (phactr4b).